The sequence spans 475 residues: Cytochrome P450 monooxygenase opdE (475 aa).

The helical transmembrane segment at 10 to 32 (VQNIPVLLLSCGFLAILFRSLVL) threads the bilayer. Position 457 (Cys457) interacts with heme.

The protein belongs to the cytochrome P450 family. Heme is required as a cofactor.

It localises to the membrane. It participates in secondary metabolite biosynthesis. Cytochrome P450 monooxygenase; part of the gene cluster that mediates the biosynthesis of oxopyrrolidines, polyketide-amino acid hybrid compounds with feature structures of tetramic acid. Does not seem to play a role in oxopyrrolidines A and B biosynthesis. May be involved in further modifications of these oxopyrrolidines. In Penicillium oxalicum (strain 114-2 / CGMCC 5302) (Penicillium decumbens), this protein is Cytochrome P450 monooxygenase opdE.